The chain runs to 361 residues: Probable galacturonosyltransferase-like 5 (361 aa).

The Cytoplasmic segment spans residues 1–6 (MHWITR). Residues 7 to 27 (FSAFFSAALAMILLSPSLQSF) form a helical; Signal-anchor for type II membrane protein membrane-spanning segment. At 28 to 361 (SPAAAIRSSH…APYDLYKHSH (334 aa)) the chain is on the lumenal side. Asparagine 218 and asparagine 234 each carry an N-linked (GlcNAc...) asparagine glycan.

This sequence belongs to the glycosyltransferase 8 family.

The protein resides in the golgi apparatus membrane. It functions in the pathway glycan metabolism; pectin biosynthesis. May be involved in pectin and/or xylans biosynthesis in cell walls. The sequence is that of Probable galacturonosyltransferase-like 5 (GATL5) from Arabidopsis thaliana (Mouse-ear cress).